The chain runs to 90 residues: UPF0223 protein lwe1035 (90 aa).

Belongs to the UPF0223 family.

This is UPF0223 protein lwe1035 from Listeria welshimeri serovar 6b (strain ATCC 35897 / DSM 20650 / CCUG 15529 / CIP 8149 / NCTC 11857 / SLCC 5334 / V8).